The primary structure comprises 261 residues: MKPASIASIKSQLTNGELTQKQIEELYKDSRKGVQAILKRHEKQQEKQALLKQAFIKMNTYEKEAYRNGNHYIAGVDEVGRGPLAGPVVAAAVILPKDFQLLGINDSKKLSEVQRNEFSHYIKQHAIAYQISFIDNTIIDKINIYEASKQAMKEAISGLQPYPDHALIDAVPLEGLNCTYEAIIKGDAESVHIAAASVLAKVARDDWMKELHEKYPLYGFNSNMGYGTKEHLQAIETYGVTPYHRYSFAPLHKYRHNTLLN.

Residues 71 to 260 form the RNase H type-2 domain; that stretch reads HYIAGVDEVG…LHKYRHNTLL (190 aa). A divalent metal cation is bound by residues aspartate 77, glutamate 78, and aspartate 169.

It belongs to the RNase HII family. It depends on Mn(2+) as a cofactor. Requires Mg(2+) as cofactor.

It is found in the cytoplasm. It catalyses the reaction Endonucleolytic cleavage to 5'-phosphomonoester.. In terms of biological role, endonuclease that specifically degrades the RNA of RNA-DNA hybrids. The polypeptide is Ribonuclease HII (Oceanobacillus iheyensis (strain DSM 14371 / CIP 107618 / JCM 11309 / KCTC 3954 / HTE831)).